Here is a 1254-residue protein sequence, read N- to C-terminus: Protein transport protein Sec31A (1254 aa).

WD repeat units follow at residues 4–47 (KEIN…EIFE), 64–111 (SSPH…AGDS), 120–160 (KHTG…SPMT), 166–206 (QPQE…LIIK), 209–254 (DHSN…SPLK), 258–298 (NHTR…VLYE), and 301–341 (TSTQ…NDNA). The segment covering 364–383 (TLPPLQLPQQTSPQSTITPL) has biased composition (low complexity). Residues 364 to 386 (TLPPLQLPQQTSPQSTITPLKKP) are disordered. One copy of the WD 8; interaction with SEC13 repeat lies at 397–428 (SFAFGGKLVTLDNIKPTAQQPQQTAAHVVHIS). Disordered stretches follow at residues 818–892 (PMQT…QSPA), 983–1008 (CFQH…GTQH), and 1058–1125 (PPAP…PGAP). Positions 832-846 (AQPAAPAVPPQYYQQ) are enriched in low complexity. 2 stretches are compositionally biased toward polar residues: residues 847–863 (GRSA…TPTA) and 872–881 (VPSSDPQGDS). A compositionally biased stretch (low complexity) spans 1080-1091 (QTLQPQQQVPDQ).

Belongs to the WD repeat SEC31 family. In terms of assembly, COPII is composed of at least 5 proteins: the SEC23/24 complex, the SEC13/31 complex and SAR1. SEC13 and SEC31 make a 2:2 tetramer that forms the edge element of the COPII outer coat. The tetramer self-assembles in multiple copies to form the complete polyhedral cage. Interacts (via WD 8) with SEC13.

The protein resides in the cytoplasm. It localises to the cytoplasmic vesicle. The protein localises to the COPII-coated vesicle membrane. It is found in the endoplasmic reticulum membrane. Component of the coat protein complex II (COPII) which promotes the formation of transport vesicles from the endoplasmic reticulum (ER). The coat has two main functions, the physical deformation of the endoplasmic reticulum membrane into vesicles and the selection of cargo molecules. This chain is Protein transport protein Sec31A (sec31a), found in Danio rerio (Zebrafish).